The primary structure comprises 138 residues: uncharacterized protein (138 aa).

An HTH merR-type domain is found at 3–72 (LYSISKAAEK…LEDINEFVKD (70 aa)). The H-T-H motif DNA-binding region spans 6-25 (ISKAAEKTSISSYTLRYYEK).

This is an uncharacterized protein from Bacillus subtilis (strain 168).